Here is a 180-residue protein sequence, read N- to C-terminus: 3-hydroxyanthranilate 3,4-dioxygenase (180 aa).

Residue R46 participates in O2 binding. Fe cation-binding residues include H50, E56, and H94. E56 is a substrate binding site. Positions 98 and 109 each coordinate substrate. Fe cation is bound by residues C124, C127, C161, and C164.

It belongs to the 3-HAO family. As to quaternary structure, homodimer. Fe(2+) is required as a cofactor.

The enzyme catalyses 3-hydroxyanthranilate + O2 = (2Z,4Z)-2-amino-3-carboxymuconate 6-semialdehyde. The protein operates within cofactor biosynthesis; NAD(+) biosynthesis; quinolinate from L-kynurenine: step 3/3. In terms of biological role, catalyzes the oxidative ring opening of 3-hydroxyanthranilate to 2-amino-3-carboxymuconate semialdehyde, which spontaneously cyclizes to quinolinate. In Jannaschia sp. (strain CCS1), this protein is 3-hydroxyanthranilate 3,4-dioxygenase.